The following is a 453-amino-acid chain: Tol-Pal system protein TolB (453 aa).

Residues 1–39 (MSFIPNTEAEALSALFSRRSVLGATAAGGLLATPLAAFA) form the signal peptide.

Belongs to the TolB family. The Tol-Pal system is composed of five core proteins: the inner membrane proteins TolA, TolQ and TolR, the periplasmic protein TolB and the outer membrane protein Pal. They form a network linking the inner and outer membranes and the peptidoglycan layer.

It is found in the periplasm. Part of the Tol-Pal system, which plays a role in outer membrane invagination during cell division and is important for maintaining outer membrane integrity. The chain is Tol-Pal system protein TolB from Gluconobacter oxydans (strain 621H) (Gluconobacter suboxydans).